The following is a 289-amino-acid chain: ATP phosphoribosyltransferase (289 aa).

The protein belongs to the ATP phosphoribosyltransferase family. Long subfamily. Mg(2+) is required as a cofactor.

It localises to the cytoplasm. It catalyses the reaction 1-(5-phospho-beta-D-ribosyl)-ATP + diphosphate = 5-phospho-alpha-D-ribose 1-diphosphate + ATP. The protein operates within amino-acid biosynthesis; L-histidine biosynthesis; L-histidine from 5-phospho-alpha-D-ribose 1-diphosphate: step 1/9. With respect to regulation, feedback inhibited by histidine. Functionally, catalyzes the condensation of ATP and 5-phosphoribose 1-diphosphate to form N'-(5'-phosphoribosyl)-ATP (PR-ATP). Has a crucial role in the pathway because the rate of histidine biosynthesis seems to be controlled primarily by regulation of HisG enzymatic activity. This chain is ATP phosphoribosyltransferase, found in Solibacter usitatus (strain Ellin6076).